The primary structure comprises 60 residues: Large ribosomal subunit protein uL30 (60 aa).

Belongs to the universal ribosomal protein uL30 family. Part of the 50S ribosomal subunit.

The protein is Large ribosomal subunit protein uL30 of Streptococcus mutans serotype c (strain ATCC 700610 / UA159).